The following is a 78-amino-acid chain: Small ribosomal subunit protein bS18 (78 aa).

This sequence belongs to the bacterial ribosomal protein bS18 family. As to quaternary structure, part of the 30S ribosomal subunit. Forms a tight heterodimer with protein bS6.

Its function is as follows. Binds as a heterodimer with protein bS6 to the central domain of the 16S rRNA, where it helps stabilize the platform of the 30S subunit. The protein is Small ribosomal subunit protein bS18 of Lactobacillus delbrueckii subsp. bulgaricus (strain ATCC 11842 / DSM 20081 / BCRC 10696 / JCM 1002 / NBRC 13953 / NCIMB 11778 / NCTC 12712 / WDCM 00102 / Lb 14).